A 210-amino-acid polypeptide reads, in one-letter code: Glutathione S-transferase P (210 aa).

Residues 2–81 (ASYTIVYFPV…HLGRTLGLYG (80 aa)) enclose the GST N-terminal domain. Position 4 is a phosphotyrosine; by EGFR (Tyr4). Glutathione contacts are provided by residues Tyr8, Arg14, Trp39, Lys45, and 52–53 (QL). Position 62 is a phosphothreonine (Thr62). 65 to 66 (QS) is a glutathione binding site. Residues 83-204 (DQREAALVDM…ASPEHVNRPI (122 aa)) form the GST C-terminal domain. N6-succinyllysine is present on residues Lys103 and Lys116. Lys128 carries the N6-acetyllysine modification.

It belongs to the GST superfamily. Pi family. In terms of assembly, homodimer. Interacts with CDK5.

The protein resides in the cytoplasm. The protein localises to the mitochondrion. Its subcellular location is the nucleus. The catalysed reaction is RX + glutathione = an S-substituted glutathione + a halide anion + H(+). The enzyme catalyses prostaglandin J2 + glutathione = prostaglandin J2-S-(R)-glutathione. It catalyses the reaction prostaglandin J2 + glutathione = prostaglandin J2-S-(S)-glutathione. It carries out the reaction prostaglandin A2 + glutathione = prostaglandin A2-S-(S)-glutathione. The catalysed reaction is 11(S)-hydroxy-14(S),15(S)-epoxy-(5Z,8Z,12E)-eicosatrienoate + glutathione = (11S,15S)-dihydroxy-14(R)-S-glutathionyl-(5Z,8Z,12E)-eicosatrienoate. Its function is as follows. Conjugation of reduced glutathione to a wide number of exogenous and endogenous hydrophobic electrophiles. Involved in the formation of glutathione conjugates of both prostaglandin A2 (PGA2) and prostaglandin J2 (PGJ2). Participates in the formation of novel hepoxilin regioisomers. Negatively regulates CDK5 activity via p25/p35 translocation to prevent neurodegeneration. This Capra hircus (Goat) protein is Glutathione S-transferase P (GSTP1).